A 263-amino-acid chain; its full sequence is Hydroxyethylthiazole kinase (263 aa).

Methionine 39 lines the substrate pocket. ATP-binding residues include lysine 115 and threonine 160. A substrate-binding site is contributed by glycine 187.

This sequence belongs to the Thz kinase family. It depends on Mg(2+) as a cofactor.

It catalyses the reaction 5-(2-hydroxyethyl)-4-methylthiazole + ATP = 4-methyl-5-(2-phosphooxyethyl)-thiazole + ADP + H(+). Its pathway is cofactor biosynthesis; thiamine diphosphate biosynthesis; 4-methyl-5-(2-phosphoethyl)-thiazole from 5-(2-hydroxyethyl)-4-methylthiazole: step 1/1. In terms of biological role, catalyzes the phosphorylation of the hydroxyl group of 4-methyl-5-beta-hydroxyethylthiazole (THZ). The sequence is that of Hydroxyethylthiazole kinase from Staphylococcus haemolyticus (strain JCSC1435).